Consider the following 119-residue polypeptide: Aspartate 1-decarboxylase (119 aa).

Catalysis depends on S25, which acts as the Schiff-base intermediate with substrate; via pyruvic acid. S25 is subject to Pyruvic acid (Ser). T57 is a substrate binding site. Y58 serves as the catalytic Proton donor. 73–75 (GAA) contacts substrate.

This sequence belongs to the PanD family. In terms of assembly, heterooctamer of four alpha and four beta subunits. The cofactor is pyruvate. Post-translationally, is synthesized initially as an inactive proenzyme, which is activated by self-cleavage at a specific serine bond to produce a beta-subunit with a hydroxyl group at its C-terminus and an alpha-subunit with a pyruvoyl group at its N-terminus.

The protein localises to the cytoplasm. It catalyses the reaction L-aspartate + H(+) = beta-alanine + CO2. Its pathway is cofactor biosynthesis; (R)-pantothenate biosynthesis; beta-alanine from L-aspartate: step 1/1. Functionally, catalyzes the pyruvoyl-dependent decarboxylation of aspartate to produce beta-alanine. In Ruthia magnifica subsp. Calyptogena magnifica, this protein is Aspartate 1-decarboxylase.